Here is a 90-residue protein sequence, read N- to C-terminus: UPF0298 protein SSU98_1559 (90 aa).

The protein belongs to the UPF0298 family.

The protein resides in the cytoplasm. The sequence is that of UPF0298 protein SSU98_1559 from Streptococcus suis (strain 98HAH33).